Here is a 705-residue protein sequence, read N- to C-terminus: p-hydroxybenzoic acid--AMP ligase FadD22 (705 aa).

Residues glutamate 541–leucine 619 enclose the Carrier domain. At serine 579 the chain carries O-(pantetheine 4'-phosphoryl)serine.

The protein belongs to the ATP-dependent AMP-binding enzyme family.

It catalyses the reaction holo-[4-hydroxyphenylalkanoate synthase] + 4-hydroxybenzoate + ATP = 4-hydroxyphenyl-[4-hydroxyphenylalkanoate synthase] + AMP + diphosphate. It participates in lipid metabolism; fatty acid biosynthesis. Catalyzes the adenylation of p-hydroxybenzoic acid (pHBA) to form p-hydroxybenzoic acid-AMP (pHBA-AMP), which is converted directly to p-hydroxybenzoyl-S-FadD22 (pHBA-S-FAdD22) thioester intermediate in a CoA-independent manner by attack of the phosphopantetheine thiol of FadD22. Usually, this intermediate primes the biosynthesis of the phenolphthiocerol (PPOL) by presenting the pHBA starter unit for elongation by Pks15/1, but M.tuberculosis lacks Pks15/1 due to a natural frameshift and thus is unable to produce PPOL. The chain is p-hydroxybenzoic acid--AMP ligase FadD22 (fadD22) from Mycobacterium tuberculosis (strain CDC 1551 / Oshkosh).